A 270-amino-acid polypeptide reads, in one-letter code: Putative pyruvate, phosphate dikinase regulatory protein (270 aa).

An ADP-binding site is contributed by 150–157; that stretch reads GPSRTSKS.

Belongs to the pyruvate, phosphate/water dikinase regulatory protein family. PDRP subfamily.

The enzyme catalyses N(tele)-phospho-L-histidyl/L-threonyl-[pyruvate, phosphate dikinase] + ADP = N(tele)-phospho-L-histidyl/O-phospho-L-threonyl-[pyruvate, phosphate dikinase] + AMP + H(+). It catalyses the reaction N(tele)-phospho-L-histidyl/O-phospho-L-threonyl-[pyruvate, phosphate dikinase] + phosphate + H(+) = N(tele)-phospho-L-histidyl/L-threonyl-[pyruvate, phosphate dikinase] + diphosphate. Its function is as follows. Bifunctional serine/threonine kinase and phosphorylase involved in the regulation of the pyruvate, phosphate dikinase (PPDK) by catalyzing its phosphorylation/dephosphorylation. This is Putative pyruvate, phosphate dikinase regulatory protein from Neorickettsia sennetsu (strain ATCC VR-367 / Miyayama) (Ehrlichia sennetsu).